The primary structure comprises 684 residues: Threonine--tRNA ligase (684 aa).

The TGS domain occupies 1-64 (MTAPNPSSLV…ESDTEVEPVA (64 aa)). Positions 261 to 567 (DHRKLGVELD…LTEHYAGAFP (307 aa)) are catalytic. Zn(2+) contacts are provided by cysteine 366, histidine 417, and histidine 544.

The protein belongs to the class-II aminoacyl-tRNA synthetase family. In terms of assembly, homodimer. It depends on Zn(2+) as a cofactor.

It localises to the cytoplasm. The enzyme catalyses tRNA(Thr) + L-threonine + ATP = L-threonyl-tRNA(Thr) + AMP + diphosphate + H(+). Catalyzes the attachment of threonine to tRNA(Thr) in a two-step reaction: L-threonine is first activated by ATP to form Thr-AMP and then transferred to the acceptor end of tRNA(Thr). Also edits incorrectly charged L-seryl-tRNA(Thr). The polypeptide is Threonine--tRNA ligase (Mycobacteroides abscessus (strain ATCC 19977 / DSM 44196 / CCUG 20993 / CIP 104536 / JCM 13569 / NCTC 13031 / TMC 1543 / L948) (Mycobacterium abscessus)).